The sequence spans 303 residues: Putative CRISPR-associated endonuclease Cas1 2 (303 aa).

Residue E149 coordinates Mn(2+).

Belongs to the CRISPR-associated endonuclease Cas1 family. As to quaternary structure, homodimer, forms a heterotetramer with a Cas2 homodimer. It depends on Mg(2+) as a cofactor. Mn(2+) is required as a cofactor.

CRISPR (clustered regularly interspaced short palindromic repeat), is an adaptive immune system that provides protection against mobile genetic elements (viruses, transposable elements and conjugative plasmids). CRISPR clusters contain sequences complementary to antecedent mobile elements and target invading nucleic acids. CRISPR clusters are transcribed and processed into CRISPR RNA (crRNA). Acts as a dsDNA endonuclease. Involved in the integration of spacer DNA into the CRISPR cassette. This Methanospirillum hungatei JF-1 (strain ATCC 27890 / DSM 864 / NBRC 100397 / JF-1) protein is Putative CRISPR-associated endonuclease Cas1 2.